Consider the following 138-residue polypeptide: Putative thioredoxin-like protein 453L (138 aa).

The 136-residue stretch at 3 to 138 (QQKYFEKPVY…FNNIVNYVMG (136 aa)) folds into the Thioredoxin domain. Active-site nucleophile residues include Cys44 and Cys47. An intrachain disulfide couples Cys44 to Cys47.

Belongs to the thioredoxin family.

In terms of biological role, participates in various redox reactions through the reversible oxidation of its active center dithiol to a disulfide and catalyzes dithiol-disulfide exchange reactions. In Acheta domesticus (House cricket), this protein is Putative thioredoxin-like protein 453L.